The primary structure comprises 299 residues: Non-structural protein NS-S (299 aa).

Residues Pro66–Pro69 form an involved in inclusion bodies formation region. Positions Phe148–Ala220 are interaction with host TNIP2.

Belongs to the Bandavirus NS-S protein family. As to quaternary structure, interacts with host TBK1; this interaction antagonizes TBK1 phosphorylation and inhibits TBK1-IRF3 interaction. Interacts with host STAT2; this interaction blocks the nuclear translocation and activation of host STAT2. Interacts with host TNIP2.

It localises to the host cytoplasm. Functionally, plays a role in the inhibition of host RLR-induced interferon-beta activation by inhibiting the phosphorylation of TANK-binding kinase 1/TBK1, thereby blocking IRF3 activation and preventing the establishment of an antiviral state. Also blocks IFN-triggered nuclear translocation and activation of host STAT2. The sequence is that of Non-structural protein NS-S (NSS) from Alces americanus (American moose).